The chain runs to 85 residues: Small ribosomal subunit protein bS20 (85 aa).

The segment at 1 to 22 (MPQIKSAIKRVKTQNATNKRNA) is disordered. Residues 13-22 (TQNATNKRNA) show a composition bias toward polar residues.

Belongs to the bacterial ribosomal protein bS20 family.

In terms of biological role, binds directly to 16S ribosomal RNA. This chain is Small ribosomal subunit protein bS20, found in Lactobacillus acidophilus (strain ATCC 700396 / NCK56 / N2 / NCFM).